A 26-amino-acid polypeptide reads, in one-letter code: Hemocyanin subunit 5 (26 aa).

Belongs to the tyrosinase family. Hemocyanin subfamily. In terms of tissue distribution, hemolymph.

Its subcellular location is the secreted. The protein resides in the extracellular space. Its function is as follows. Hemocyanins are copper-containing oxygen carriers occurring freely dissolved in the hemolymph of many mollusks and arthropods. The protein is Hemocyanin subunit 5 of Maja squinado (Mediterranean spider crab).